The sequence spans 346 residues: Methylthioribose-1-phosphate isomerase (346 aa).

Residues 46-48 (RGA), Arg89, and Gln196 each bind substrate. The active-site Proton donor is the Asp237. Residue 247-248 (NK) coordinates substrate.

Belongs to the eIF-2B alpha/beta/delta subunits family. MtnA subfamily.

It carries out the reaction 5-(methylsulfanyl)-alpha-D-ribose 1-phosphate = 5-(methylsulfanyl)-D-ribulose 1-phosphate. It participates in amino-acid biosynthesis; L-methionine biosynthesis via salvage pathway; L-methionine from S-methyl-5-thio-alpha-D-ribose 1-phosphate: step 1/6. Its function is as follows. Catalyzes the interconversion of methylthioribose-1-phosphate (MTR-1-P) into methylthioribulose-1-phosphate (MTRu-1-P). The sequence is that of Methylthioribose-1-phosphate isomerase from Geobacter sp. (strain M21).